A 1018-amino-acid polypeptide reads, in one-letter code: Putative type I restriction enzyme MjaVIIIP endonuclease subunit (1018 aa).

The protein belongs to the HsdR family. As to quaternary structure, the type I restriction/modification system is composed of three polypeptides R, M and S.

It catalyses the reaction Endonucleolytic cleavage of DNA to give random double-stranded fragments with terminal 5'-phosphates, ATP is simultaneously hydrolyzed.. Functionally, the restriction (R) subunit of a type I restriction enzyme that recognizes 5'-GAYN(5)GTAA-3' and cleaves a random distance away. The R subunit is required for both endonuclease and ATPase activities but not for modification. After locating a non-methylated recognition site, the enzyme complex serves as a molecular motor that translocates DNA in an ATP-dependent manner until a collision occurs that triggers cleavage. This is Putative type I restriction enzyme MjaVIIIP endonuclease subunit from Methanocaldococcus jannaschii (strain ATCC 43067 / DSM 2661 / JAL-1 / JCM 10045 / NBRC 100440) (Methanococcus jannaschii).